Consider the following 195-residue polypeptide: Adenylate kinase (195 aa).

8-16 (GIPGVGKTT) lines the ATP pocket.

It belongs to the archaeal adenylate kinase family.

Its subcellular location is the cytoplasm. It carries out the reaction AMP + ATP = 2 ADP. This Saccharolobus islandicus (strain M.14.25 / Kamchatka #1) (Sulfolobus islandicus) protein is Adenylate kinase.